The following is a 247-amino-acid chain: Carboxy-S-adenosyl-L-methionine synthase (247 aa).

Residues Tyr39, 64-66 (GCS), 89-90 (DN), 117-118 (DI), Asn132, and Arg199 each bind S-adenosyl-L-methionine.

This sequence belongs to the class I-like SAM-binding methyltransferase superfamily. Cx-SAM synthase family. Homodimer.

The catalysed reaction is prephenate + S-adenosyl-L-methionine = carboxy-S-adenosyl-L-methionine + 3-phenylpyruvate + H2O. Its function is as follows. Catalyzes the conversion of S-adenosyl-L-methionine (SAM) to carboxy-S-adenosyl-L-methionine (Cx-SAM). This Cronobacter sakazakii (strain ATCC BAA-894) (Enterobacter sakazakii) protein is Carboxy-S-adenosyl-L-methionine synthase.